Reading from the N-terminus, the 619-residue chain is Very-long-chain aldehyde decarbonylase GL1-4 (619 aa).

A run of 5 helical transmembrane segments spans residues 45 to 65 (IAFSLILPSLLLRMIHNQIWI), 94 to 114 (GWDDQILFNGLVFYAGYLAMP), 126 to 146 (GAVVTALVHTGPVEFLYYWFH), 178 to 198 (FAEHVVYFILFAIPILSTIYL), and 325 to 345 (AWYMWTLWPLAWLSMVLAWIY). A Fatty acid hydroxylase domain is found at 138–272 (VEFLYYWFHR…MPFYDYIYNT (135 aa)).

The protein belongs to the sterol desaturase family. As to quaternary structure, homodimer. In terms of tissue distribution, expressed ubiquitously at low levels, with higher accumulation in developing panicles, shoots and flag leaves.

It localises to the endoplasmic reticulum membrane. The enzyme catalyses a long-chain fatty aldehyde + 2 NADPH + O2 + H(+) = a long-chain alkane + formate + 2 NADP(+) + H2O. In terms of biological role, aldehyde decarbonylase involved in the conversion of aldehydes to alkanes. Core component of a very-long-chain alkane synthesis complex. The polypeptide is Very-long-chain aldehyde decarbonylase GL1-4 (Oryza sativa subsp. japonica (Rice)).